Here is a 224-residue protein sequence, read N- to C-terminus: Response regulator protein GraR (224 aa).

The region spanning 2–115 (QILLVEDDNT…VLIAKLQAIY (114 aa)) is the Response regulatory domain. At D51 the chain carries 4-aspartylphosphate. A DNA-binding region (ompR/PhoB-type) is located at residues 126–224 (KRTLTWQDAI…KVGKGYMAHE (99 aa)). T128, T130, and T149 each carry phosphothreonine.

In terms of assembly, interacts with GraX. Post-translationally, phosphorylated by GraS. Phosphorylated by Stk1; phosphorylation increases the DNA-binding activity of GraR.

Its subcellular location is the cytoplasm. Functionally, member of the two-component regulatory system GraR/GraS involved in resistance against cationic antimicrobial peptides (CAMPs). Upon phosphorylation by GraS, functions as a transcription regulator by direct binding to promoter regions of target genes such as adhesins, exoproteins, transporters, toxins, and proteins involved in cell wall synthesis. Down-regulates the expression of many genes involved in RNA and amino acid synthesis or glycolysis. The polypeptide is Response regulator protein GraR (graR) (Staphylococcus aureus (strain bovine RF122 / ET3-1)).